A 499-amino-acid chain; its full sequence is Multiphosphoryl transfer protein (499 aa).

Residues 2–142 enclose the PTS EIIA type-2 domain; the sequence is LELSESNIHL…AEFCAILMGE (141 aa). His62 acts as the Tele-phosphohistidine intermediate; for EIIA activity in catalysis. Position 62 is a phosphohistidine; by HPr (His62). A m domain region spans residues 155 to 285; sequence SLDVNTQSLL…SDVETQSVEG (131 aa). The HPr 1 domain occupies 286–376; the sequence is AVVGTFTIRN…KAIANGLGEN (91 aa). His300 acts as the Pros-phosphohistidine intermediate; for HPr 1 activity in catalysis. His300 carries the post-translational modification Phosphohistidine. Residues 378 to 409 form a linker region; it reads SAVPPSEPDTIEIMGDQIHTPAVTEDDNLPAN. Residues 410 to 499 enclose the HPr 2 domain; that stretch reads AIEAVFVIKN…GAVIESGLGE (90 aa). His424 is modified (phosphohistidine). The Pros-phosphohistidine intermediate; for HPr 2 activity role is filled by His424.

The protein localises to the cytoplasm. Functionally, the phosphoenolpyruvate-dependent sugar phosphotransferase system (sugar PTS), a major carbohydrate active transport system, catalyzes the phosphorylation of incoming sugar substrates concomitantly with their translocation across the cell membrane. The enzyme II FruAB PTS system is involved in fructose transport. This Haemophilus influenzae (strain ATCC 51907 / DSM 11121 / KW20 / Rd) protein is Multiphosphoryl transfer protein (fruB).